The primary structure comprises 591 residues: MAERTHACGKVTVEAVGQTVQLKGWVQKRRDLGGLIFIDLRDRTGIVQVVFNPETSKEALEVAETIRSEYVLHVEGTVVERGEGAINDNMATGRIEVQATKVSVLNAAKTTPIIIADDTDASEDVRLKYRYLDLRRPVMFNTFKMRHDVTKTIRNFLDTEEFLEVETPILTKSTPEGARDYLVPSRVHDGEFYALPQSPQLFKQLLMVGGFERYYQVARCFRDEDLRADRQPEFTQIDIEASFLTQDEILDMMERMMTKVMKDAKGVEVSAPFPRMKYADAMARYGSDKPDTRFEMELTDLSEFAAGCGFKVFTSAVESGGQVKAINAKGAASKYSRKDIDALTEFVKVYGAKGLAWLKVEEDGLKGPIAKFFGEEDASVLMNTLEATAGDLLLFVADKKSVVADSLGALRLRLGKELELIDESKFNFLWVTDWPLLEYDEDADRYFAAHHPFTMPFREDVELLETAPEKARAQAYDLVLNGYELGGGSLRIYERDVQEKMFKALGFSQEEAQEQFGFLLEAFEYGTPPHGGIALGLDRLVMLLAGRTNLRDTIAFPKTASASCLLTEAPSPVAEAQLEELNLKLNVKEEK.

Glu176 is a binding site for L-aspartate. The interval 200 to 203 (QLFK) is aspartate. L-aspartate is bound at residue Arg222. ATP is bound by residues 222–224 (RDE) and Gln231. L-aspartate is bound at residue His450. Residue Glu484 participates in ATP binding. L-aspartate is bound at residue Arg491. 536 to 539 (GLDR) serves as a coordination point for ATP.

It belongs to the class-II aminoacyl-tRNA synthetase family. Type 1 subfamily. As to quaternary structure, homodimer.

It is found in the cytoplasm. The catalysed reaction is tRNA(Asx) + L-aspartate + ATP = L-aspartyl-tRNA(Asx) + AMP + diphosphate. In terms of biological role, aspartyl-tRNA synthetase with relaxed tRNA specificity since it is able to aspartylate not only its cognate tRNA(Asp) but also tRNA(Asn). Reaction proceeds in two steps: L-aspartate is first activated by ATP to form Asp-AMP and then transferred to the acceptor end of tRNA(Asp/Asn). The protein is Aspartate--tRNA(Asp/Asn) ligase of Bacillus anthracis (strain A0248).